A 97-amino-acid polypeptide reads, in one-letter code: Single insulin-like growth factor-binding domain protein-1 (97 aa).

The first 19 residues, 1 to 19 (MKTLFVFAVGIMLSMRASA), serve as a signal peptide directing secretion. The IGFBP N-terminal domain maps to 20 to 96 (FTCPECRPEL…PEIVGTCVKI (77 aa)). An O-linked (GalNAc...) threonine glycan is attached at Thr21. Intrachain disulfides connect Cys22–Cys45, Cys25–Cys47, Cys30–Cys48, Cys36–Cys51, Cys59–Cys75, and Cys69–Cys93.

Expressed in hemocytes.

It is found in the secreted. Functionally, has a role in the innate immune system. This Cupiennius salei (American wandering spider) protein is Single insulin-like growth factor-binding domain protein-1.